The sequence spans 105 residues: Small ribosomal subunit protein uS14m (105 aa).

Belongs to the universal ribosomal protein uS14 family. In terms of assembly, component of the mitochondrial small ribosomal subunit (mt-SSU). Mature yeast 74S mitochondrial ribosomes consist of a small (37S) and a large (54S) subunit. The 37S small subunit contains a 15S ribosomal RNA (15S mt-rRNA) and at least 32 different proteins. The 54S large subunit contains a 21S rRNA (21S mt-rRNA) and at least 45 different proteins.

It is found in the mitochondrion. In terms of biological role, component of the mitochondrial ribosome (mitoribosome), a dedicated translation machinery responsible for the synthesis of mitochondrial genome-encoded proteins, including at least some of the essential transmembrane subunits of the mitochondrial respiratory chain. The mitoribosomes are attached to the mitochondrial inner membrane and translation products are cotranslationally integrated into the membrane. This is Small ribosomal subunit protein uS14m (mrp2) from Schizosaccharomyces pombe (strain 972 / ATCC 24843) (Fission yeast).